The sequence spans 338 residues: Oxygen-dependent coproporphyrinogen-III oxidase (338 aa).

Ser104 lines the substrate pocket. A divalent metal cation is bound by residues His108 and His118. The active-site Proton donor is His118. Substrate is bound at residue 120 to 122 (NYR). A divalent metal cation contacts are provided by His152 and His182. Residues 274-309 (YVEFNLVYDRGTIFGLQTNGRTESILMSLPPLVRWE) form an important for dimerization region.

The protein belongs to the aerobic coproporphyrinogen-III oxidase family. In terms of assembly, homodimer. It depends on a divalent metal cation as a cofactor.

It is found in the cytoplasm. It catalyses the reaction coproporphyrinogen III + O2 + 2 H(+) = protoporphyrinogen IX + 2 CO2 + 2 H2O. The protein operates within porphyrin-containing compound metabolism; protoporphyrin-IX biosynthesis; protoporphyrinogen-IX from coproporphyrinogen-III (O2 route): step 1/1. Involved in the heme and chlorophyll biosynthesis. Catalyzes the aerobic oxidative decarboxylation of propionate groups of rings A and B of coproporphyrinogen-III to yield the vinyl groups in protoporphyrinogen-IX. In Thermosynechococcus vestitus (strain NIES-2133 / IAM M-273 / BP-1), this protein is Oxygen-dependent coproporphyrinogen-III oxidase.